Reading from the N-terminus, the 573-residue chain is Arginine--tRNA ligase (573 aa).

A 'HIGH' region motif is present at residues 122–132 (PNLAKEMHVGH).

This sequence belongs to the class-I aminoacyl-tRNA synthetase family. Monomer.

The protein localises to the cytoplasm. It carries out the reaction tRNA(Arg) + L-arginine + ATP = L-arginyl-tRNA(Arg) + AMP + diphosphate. The polypeptide is Arginine--tRNA ligase (Laribacter hongkongensis (strain HLHK9)).